Consider the following 578-residue polypeptide: Frizzled and smoothened-like protein Q (578 aa).

An N-terminal signal peptide occupies residues 1–23 (MKNSFLINILIIYYLFIILFVNS). The Extracellular segment spans residues 24-233 (QDLKLGGSCE…GKTKILDRTN (210 aa)). The FZ domain maps to 27–157 (KLGGSCELID…GAPMFPINST (131 aa)). Cystine bridges form between cysteine 32–cysteine 95, cysteine 41–cysteine 88, cysteine 79–cysteine 128, and cysteine 121–cysteine 141. N-linked (GlcNAc...) asparagine glycans are attached at residues asparagine 46, asparagine 64, asparagine 99, and asparagine 104. N-linked (GlcNAc...) asparagine glycosylation is found at asparagine 144, asparagine 155, asparagine 181, and asparagine 233. A helical transmembrane segment spans residues 234 to 254 (YTLTSISFITCIFMILTFGVL). Residues 255 to 261 (PNKITHR) lie on the Cytoplasmic side of the membrane. The chain crosses the membrane as a helical span at residues 262 to 282 (MESILSFACGGCITALSLFIQ). Topologically, residues 283–305 (SRQDNFNCSSDPGRFKSQSDYLC) are extracellular. Asparagine 289 carries N-linked (GlcNAc...) asparagine glycosylation. Residues 306 to 326 (LLTGLIFQFGAITSIFWSPMI) form a helical membrane-spanning segment. Topologically, residues 327-341 (AYDFYITSTLGKIRK) are cytoplasmic. Residues 342–362 (FGLYRIVLWSFIFVLTALPAF) form a helical membrane-spanning segment. At 363–388 (GGKYSATVATNCWINSDDGSAWQYVS) the chain is on the extracellular side. A helical transmembrane segment spans residues 389–409 (FYIPSWCAMGLICLFSILSVI). The Cytoplasmic segment spans residues 410–422 (NVSKMYIQTPNNR). The helical transmembrane segment at 423 to 443 (ILFFNIKILITLLLFLFVLTF) threads the bilayer. Topologically, residues 444–490 (ASSLKFYMEERMDTYFDAIAVWVECIGKGDPSQCELHAPGYDLKALN) are extracellular. The chain crosses the membrane as a helical span at residues 491-511 (IVVIGILGFTVFIGYGLDPIV). The Cytoplasmic segment spans residues 512-578 (IHIWMESKKF…LKSTEINQQP (67 aa)). A compositionally biased stretch (low complexity) spans 544-556 (NNNNNETASTSSG). Residues 544–578 (NNNNNETASTSSGNERKQTTVKMSNLKSTEINQQP) form a disordered region. The span at 563 to 578 (TVKMSNLKSTEINQQP) shows a compositional bias: polar residues.

It belongs to the G-protein coupled receptor Fz/Smo family.

The protein localises to the membrane. The polypeptide is Frizzled and smoothened-like protein Q (fslQ) (Dictyostelium discoideum (Social amoeba)).